We begin with the raw amino-acid sequence, 367 residues long: Septin-1 (367 aa).

The Septin-type G domain maps to 22–296; it reads KGFDFTLMVA…EGYRARCLQS (275 aa). Residues 32–39 form a G1 motif region; the sequence is GESGLGKS. GTP contacts are provided by residues 32–39, threonine 66, glycine 92, and 171–179; these read GESGLGKS and KADALMPKE. Residues 89–92 are G3 motif; that stretch reads DTPG. Positions 170 to 173 are G4 motif; it reads GKAD. Serine 206 is subject to Phosphoserine. GTP contacts are provided by glycine 229 and arginine 245. Serine 248 carries the phosphoserine; by AURKB modification. Threonine 251 carries the post-translational modification Phosphothreonine. 2 positions are modified to phosphoserine; by AURKB: serine 307 and serine 315.

This sequence belongs to the TRAFAC class TrmE-Era-EngA-EngB-Septin-like GTPase superfamily. Septin GTPase family. As to quaternary structure, septins polymerize into heterooligomeric protein complexes that form filaments, and can associate with cellular membranes, actin filaments and microtubules. GTPase activity is required for filament formation. Interacts with AURKB.

The protein localises to the cytoplasm. It is found in the cytoskeleton. It localises to the microtubule organizing center. Its subcellular location is the centrosome. The protein resides in the midbody. Functionally, filament-forming cytoskeletal GTPase. May play a role in cytokinesis (Potential). The polypeptide is Septin-1 (Bos taurus (Bovine)).